The chain runs to 485 residues: NADH-quinone oxidoreductase subunit N (485 aa).

14 helical membrane passes run 8-28 (LIALLPLLIVGLTVVVVMLSI), 35-55 (FLNATLSVIGLNAALVSLWFV), 71-91 (GFAMLYTGLVLLASLATCTFA), 105-125 (FYLLVLIAALGGILLANANHL), 127-147 (ALFLGIELISLPLFGLIGYAF), 159-179 (YTILSAAASSFLLFGMALVYA), 203-223 (LLAGFGLMIVGLGFKLSLVPF), 235-255 (PAPVSTFLATASKIAIFGVVM), 271-291 (IVLGVIAFASIIFGNLMALSQ), 297-317 (LLGYSSISHLGYLLVALIALQ), 326-346 (VGVYLAGYLFSSLGAFGVVSL), 373-393 (AAVMTVMMLSLAGIPMTLGFI), 408-430 (WWLVAAVVVGSAIGLYYYLRVAV), and 455-475 (IVVLISALLVLVLGIYPQPLI).

Belongs to the complex I subunit 2 family. NDH-1 is composed of 13 different subunits. Subunits NuoA, H, J, K, L, M, N constitute the membrane sector of the complex.

The protein resides in the cell inner membrane. The enzyme catalyses a quinone + NADH + 5 H(+)(in) = a quinol + NAD(+) + 4 H(+)(out). Functionally, NDH-1 shuttles electrons from NADH, via FMN and iron-sulfur (Fe-S) centers, to quinones in the respiratory chain. The immediate electron acceptor for the enzyme in this species is believed to be ubiquinone. Couples the redox reaction to proton translocation (for every two electrons transferred, four hydrogen ions are translocated across the cytoplasmic membrane), and thus conserves the redox energy in a proton gradient. The protein is NADH-quinone oxidoreductase subunit N of Citrobacter koseri (strain ATCC BAA-895 / CDC 4225-83 / SGSC4696).